A 163-amino-acid polypeptide reads, in one-letter code: Ureidoglycolate lyase (163 aa).

This sequence belongs to the ureidoglycolate lyase family. Homodimer. Requires Ni(2+) as cofactor.

The enzyme catalyses (S)-ureidoglycolate = urea + glyoxylate. It participates in nitrogen metabolism; (S)-allantoin degradation. In terms of biological role, catalyzes the catabolism of the allantoin degradation intermediate (S)-ureidoglycolate, generating urea and glyoxylate. Involved in the utilization of allantoin as nitrogen source. In Mesorhizobium japonicum (strain LMG 29417 / CECT 9101 / MAFF 303099) (Mesorhizobium loti (strain MAFF 303099)), this protein is Ureidoglycolate lyase.